Reading from the N-terminus, the 346-residue chain is MNPIIFTTILLTIMLGTNNVMISSHWLLVWIGFEMNMLAIIPIMMKNHNPRATEASTKYFLTQSTASMLLMMAVIINLMFSGQWTVMKLFNPMASMLMTMALAMKLGMAPFHFWVPEVTQGIPLSSGLILLTWQKLAPMSVLYQIFPSINLNLILTLSILSILIGGWGGLNQTQLRKIMAYSSIAHMGWMTASLHTPYYTLLNLIIYITMTSTMFTMFMANSTTTTLSLSHTWNKTPIMTILILATLLSMGGLPPLSGFMPKWMIIQEMTKNNSIILPTFMAITALLNLYFYMRLTYSTALTMFPSTNNMKMKWQFPLMKKMTFLPTMVVLSTMTLPLTPMLSVLE.

The next 10 helical transmembrane spans lie at 3-23 (PIIF…VMIS), 25-45 (HWLL…PIMM), 67-87 (SMLL…WTVM), 96-116 (MLMT…FWVP), 122-142 (IPLS…MSVL), 145-165 (IFPS…ILIG), 200-220 (TLLN…MFMA), 238-258 (IMTI…PLSG), 273-293 (NSII…YFYM), and 324-344 (FLPT…MLSV).

This sequence belongs to the complex I subunit 2 family. In terms of assembly, core subunit of respiratory chain NADH dehydrogenase (Complex I) which is composed of 45 different subunits. Interacts with TMEM242.

It localises to the mitochondrion inner membrane. The catalysed reaction is a ubiquinone + NADH + 5 H(+)(in) = a ubiquinol + NAD(+) + 4 H(+)(out). Core subunit of the mitochondrial membrane respiratory chain NADH dehydrogenase (Complex I) which catalyzes electron transfer from NADH through the respiratory chain, using ubiquinone as an electron acceptor. Essential for the catalytic activity and assembly of complex I. This chain is NADH-ubiquinone oxidoreductase chain 2, found in Bos mutus grunniens (Wild yak).